The chain runs to 529 residues: Bifunctional purine biosynthesis protein PurH (529 aa).

Positions 1–148 (MQQRRPVRRA…KNHKDVAIVV (148 aa)) constitute an MGS-like domain.

This sequence belongs to the PurH family.

It catalyses the reaction (6R)-10-formyltetrahydrofolate + 5-amino-1-(5-phospho-beta-D-ribosyl)imidazole-4-carboxamide = 5-formamido-1-(5-phospho-D-ribosyl)imidazole-4-carboxamide + (6S)-5,6,7,8-tetrahydrofolate. The catalysed reaction is IMP + H2O = 5-formamido-1-(5-phospho-D-ribosyl)imidazole-4-carboxamide. The protein operates within purine metabolism; IMP biosynthesis via de novo pathway; 5-formamido-1-(5-phospho-D-ribosyl)imidazole-4-carboxamide from 5-amino-1-(5-phospho-D-ribosyl)imidazole-4-carboxamide (10-formyl THF route): step 1/1. It functions in the pathway purine metabolism; IMP biosynthesis via de novo pathway; IMP from 5-formamido-1-(5-phospho-D-ribosyl)imidazole-4-carboxamide: step 1/1. In Salmonella paratyphi A (strain ATCC 9150 / SARB42), this protein is Bifunctional purine biosynthesis protein PurH.